Reading from the N-terminus, the 81-residue chain is Protein RALF-like 7 (81 aa).

A signal peptide spans 1–29; that stretch reads MSARKKNRIHVFFVSIMIIISLVSGFGEG. Intrachain disulfides connect cysteine 46–cysteine 54 and cysteine 66–cysteine 72.

It belongs to the plant rapid alkalinization factor (RALF) family.

The protein resides in the secreted. Functionally, cell signaling peptide that may regulate plant stress, growth, and development. Mediates a rapid alkalinization of extracellular space by mediating a transient increase in the cytoplasmic Ca(2+) concentration leading to a calcium-dependent signaling events through a cell surface receptor and a concomitant activation of some intracellular mitogen-activated protein kinases. This chain is Protein RALF-like 7 (RALFL7), found in Arabidopsis thaliana (Mouse-ear cress).